Consider the following 214-residue polypeptide: Osteoclast-stimulating factor 1 (214 aa).

Residues G12–E71 form the SH3 domain. ANK repeat units follow at residues S72–G101, A105–Q135, and L139–L168.

Its subcellular location is the cytoplasm. In terms of biological role, induces bone resorption, acting probably through a signaling cascade which results in the secretion of factor(s) enhancing osteoclast formation and activity. This chain is Osteoclast-stimulating factor 1 (ostf1), found in Xenopus laevis (African clawed frog).